The primary structure comprises 367 residues: Carbamoyl phosphate synthase small chain (367 aa).

Residues methionine 1–methionine 182 form a CPSase region. Residues serine 50, glycine 230, and glycine 232 each contribute to the L-glutamine site. Residues methionine 182–lysine 367 enclose the Glutamine amidotransferase type-1 domain. Cysteine 258 serves as the catalytic Nucleophile. 5 residues coordinate L-glutamine: leucine 259, glutamine 262, asparagine 300, glycine 302, and tyrosine 303. Residues histidine 343 and glutamate 345 contribute to the active site.

The protein belongs to the CarA family. As to quaternary structure, composed of two chains; the small (or glutamine) chain promotes the hydrolysis of glutamine to ammonia, which is used by the large (or ammonia) chain to synthesize carbamoyl phosphate. Tetramer of heterodimers (alpha,beta)4.

It carries out the reaction hydrogencarbonate + L-glutamine + 2 ATP + H2O = carbamoyl phosphate + L-glutamate + 2 ADP + phosphate + 2 H(+). The enzyme catalyses L-glutamine + H2O = L-glutamate + NH4(+). It participates in amino-acid biosynthesis; L-arginine biosynthesis; carbamoyl phosphate from bicarbonate: step 1/1. The protein operates within pyrimidine metabolism; UMP biosynthesis via de novo pathway; (S)-dihydroorotate from bicarbonate: step 1/3. Small subunit of the glutamine-dependent carbamoyl phosphate synthetase (CPSase). CPSase catalyzes the formation of carbamoyl phosphate from the ammonia moiety of glutamine, carbonate, and phosphate donated by ATP, constituting the first step of 2 biosynthetic pathways, one leading to arginine and/or urea and the other to pyrimidine nucleotides. The small subunit (glutamine amidotransferase) binds and cleaves glutamine to supply the large subunit with the substrate ammonia. The polypeptide is Carbamoyl phosphate synthase small chain (Saccharolobus solfataricus (strain ATCC 35092 / DSM 1617 / JCM 11322 / P2) (Sulfolobus solfataricus)).